The chain runs to 948 residues: RNA polymerase-associated protein RapA (948 aa).

A Helicase ATP-binding domain is found at 164-332 (EVADRIAPRV…FARLRLLDPN (169 aa)). 177–184 (DEVGLGKT) contributes to the ATP binding site. The DEAH box signature appears at 278-281 (DEAH). A Helicase C-terminal domain is found at 473 to 627 (RVDWLIDTLK…TCPTGNALQH (155 aa)).

It belongs to the SNF2/RAD54 helicase family. RapA subfamily. Interacts with the RNAP. Has a higher affinity for the core RNAP than for the holoenzyme. Its ATPase activity is stimulated by binding to RNAP.

Transcription regulator that activates transcription by stimulating RNA polymerase (RNAP) recycling in case of stress conditions such as supercoiled DNA or high salt concentrations. Probably acts by releasing the RNAP, when it is trapped or immobilized on tightly supercoiled DNA. Does not activate transcription on linear DNA. Probably not involved in DNA repair. This chain is RNA polymerase-associated protein RapA, found in Pseudomonas syringae pv. syringae (strain B728a).